The primary structure comprises 996 residues: Receptor-like protein kinase HSL1 (996 aa).

The signal sequence occupies residues 1–15 (MYLLFLFLLFPTVFS). The Extracellular portion of the chain corresponds to 16 to 618 (LNQDGFILQQ…ENEAKKRGYV (603 aa)). LRR repeat units follow at residues 59-83 (FSSV…ICRL), 84-107 (SNLA…IAAC), 109-131 (SLQT…LADI), 133-154 (TLVH…SFGK), 155-178 (FENL…FLGN), 179-203 (ISTL…EFGN), 205-228 (TNLE…LGQL), 229-252 (SKLV…LGGL), 253-276 (TNVV…LGNL), 278-299 (SLRL…ELCR), 300-323 (VPLE…IALS), 325-347 (NLYE…LGLN), 348-371 (SPLR…LCAK), 373-395 (ELEE…LADC), 396-419 (RSLT…FWGL), 421-443 (HVNL…IGGA), 444-467 (SNLS…IGSL), 468-491 (DNLN…LMSL), 493-515 (ELGT…IKSW), 516-539 (KKLN…IGSL), 541-562 (VLNY…SLQS), and 563-586 (LKLN…LAKD). Residues N93 and N97 are each glycosylated (N-linked (GlcNAc...) asparagine). 4 N-linked (GlcNAc...) asparagine glycosylation sites follow: N143, N178, N186, and N203. N262 carries an N-linked (GlcNAc...) asparagine glycan. Residues N429 and N445 are each glycosylated (N-linked (GlcNAc...) asparagine). N569 carries N-linked (GlcNAc...) asparagine glycosylation. A helical transmembrane segment spans residues 619-639 (WLLRSIFVLAAMVLLAGVAWF). At 640–996 (YFKYRTFKKA…EDTSDQGSIA (357 aa)) the chain is on the cytoplasmic side. Positions 676 to 962 (LDEDNVIGAG…RRVVKMLQEI (287 aa)) constitute a Protein kinase domain. Residues 682-690 (IGAGASGKV) and K704 contribute to the ATP site. 2 positions are modified to phosphotyrosine: Y764 and Y802. Residue D815 is the Proton acceptor of the active site. Phosphoserine is present on S851. 2 positions are modified to phosphotyrosine: Y859 and Y866. At T867 the chain carries Phosphothreonine. A disordered region spans residues 967 to 996 (EDSLHKIRDDKDGKLTPYYNEDTSDQGSIA). Residues 968 to 980 (DSLHKIRDDKDGK) show a composition bias toward basic and acidic residues.

The protein belongs to the protein kinase superfamily. Ser/Thr protein kinase family.

The protein resides in the cell membrane. The enzyme catalyses L-seryl-[protein] + ATP = O-phospho-L-seryl-[protein] + ADP + H(+). The catalysed reaction is L-threonyl-[protein] + ATP = O-phospho-L-threonyl-[protein] + ADP + H(+). This Arabidopsis thaliana (Mouse-ear cress) protein is Receptor-like protein kinase HSL1 (HSL1).